The following is a 369-amino-acid chain: Flagellar P-ring protein (369 aa).

A signal peptide spans 1–23; that stretch reads MRIASFFTVLLTLLTLNITPASA.

It belongs to the FlgI family. The basal body constitutes a major portion of the flagellar organelle and consists of four rings (L,P,S, and M) mounted on a central rod.

It localises to the periplasm. It is found in the bacterial flagellum basal body. Functionally, assembles around the rod to form the L-ring and probably protects the motor/basal body from shearing forces during rotation. This is Flagellar P-ring protein from Pectobacterium atrosepticum (strain SCRI 1043 / ATCC BAA-672) (Erwinia carotovora subsp. atroseptica).